A 378-amino-acid chain; its full sequence is Ubiquitin-conjugating enzyme E2 Q2 (378 aa).

The interval 126–152 (DQPLPTGQNGTTEEVTSEEEEEEEMAE) is disordered. Over residues 140–152 (VTSEEEEEEEMAE) the composition is skewed to acidic residues. Residues 207 to 371 (QASDRLMKEL…VQIHEKNGWY (165 aa)) form the UBC core domain. The Glycyl thioester intermediate role is filled by Cys-307.

This sequence belongs to the ubiquitin-conjugating enzyme family. Post-translationally, auto-ubiquitinated in vitro.

The protein resides in the cytoplasm. It carries out the reaction S-ubiquitinyl-[E1 ubiquitin-activating enzyme]-L-cysteine + [E2 ubiquitin-conjugating enzyme]-L-cysteine = [E1 ubiquitin-activating enzyme]-L-cysteine + S-ubiquitinyl-[E2 ubiquitin-conjugating enzyme]-L-cysteine.. The protein operates within protein modification; protein ubiquitination. Accepts ubiquitin from the E1 complex and catalyzes its covalent attachment to other proteins. In vitro catalyzes 'Lys-48'-linked polyubiquitination. This is Ubiquitin-conjugating enzyme E2 Q2 (Ube2q2) from Mus musculus (Mouse).